The chain runs to 414 residues: 2,3-bisphosphoglycerate-independent phosphoglycerate mutase (414 aa).

This sequence belongs to the BPG-independent phosphoglycerate mutase family. A-PGAM subfamily.

The catalysed reaction is (2R)-2-phosphoglycerate = (2R)-3-phosphoglycerate. It functions in the pathway carbohydrate degradation; glycolysis; pyruvate from D-glyceraldehyde 3-phosphate: step 3/5. Catalyzes the interconversion of 2-phosphoglycerate and 3-phosphoglycerate. The chain is 2,3-bisphosphoglycerate-independent phosphoglycerate mutase from Saccharolobus islandicus (strain L.S.2.15 / Lassen #1) (Sulfolobus islandicus).